The primary structure comprises 357 residues: Isopentenyl-diphosphate delta-isomerase (357 aa).

6-7 (RK) is a substrate binding site. Residues serine 62, 63–65 (AMT), serine 93, and asparagine 122 each bind FMN. 93–95 (SQR) is a binding site for substrate. Residue glutamine 156 participates in substrate binding. Glutamate 157 contacts Mg(2+). Residues lysine 186, threonine 216, 267–269 (GVR), and 288–289 (AL) contribute to the FMN site.

It belongs to the IPP isomerase type 2 family. Homooctamer. Dimer of tetramers. Requires FMN as cofactor. NADPH serves as cofactor. Mg(2+) is required as a cofactor.

The protein localises to the cytoplasm. The enzyme catalyses isopentenyl diphosphate = dimethylallyl diphosphate. In terms of biological role, involved in the biosynthesis of isoprenoids. Catalyzes the 1,3-allylic rearrangement of the homoallylic substrate isopentenyl (IPP) to its allylic isomer, dimethylallyl diphosphate (DMAPP). The sequence is that of Isopentenyl-diphosphate delta-isomerase from Methanothrix thermoacetophila (strain DSM 6194 / JCM 14653 / NBRC 101360 / PT) (Methanosaeta thermophila).